We begin with the raw amino-acid sequence, 55 residues long: Large ribosomal subunit protein uL15 (55 aa).

This sequence belongs to the universal ribosomal protein uL15 family. Part of the 50S ribosomal subunit.

Functionally, binds to the 23S rRNA. The protein is Large ribosomal subunit protein uL15 (rplO) of Lactococcus lactis subsp. cremoris (Streptococcus cremoris).